A 178-amino-acid chain; its full sequence is Meiotically up-regulated gene 95 protein (178 aa).

Residues 1-12 lie on the Cytoplasmic side of the membrane; the sequence is MNLFVYIAQNPT. A helical; Signal-anchor for type II membrane protein membrane pass occupies residues 13 to 30; sequence LTKWFFCCVCTILTMPFF. Over 31–178 the chain is Lumenal; that stretch reads KKPYRKRGIS…ESIEKPENDN (148 aa).

The protein localises to the endoplasmic reticulum membrane. Has a role in meiosis. This is Meiotically up-regulated gene 95 protein (mug95) from Schizosaccharomyces pombe (strain 972 / ATCC 24843) (Fission yeast).